Consider the following 385-residue polypeptide: Aspartate/prephenate aminotransferase (385 aa).

The L-aspartate site is built by Gly39, Trp125, and Asn175. Lys234 bears the N6-(pyridoxal phosphate)lysine mark. L-aspartate is bound at residue Arg361.

This sequence belongs to the class-I pyridoxal-phosphate-dependent aminotransferase family. As to quaternary structure, homodimer. It depends on pyridoxal 5'-phosphate as a cofactor.

Its subcellular location is the cytoplasm. It catalyses the reaction L-aspartate + 2-oxoglutarate = oxaloacetate + L-glutamate. The catalysed reaction is L-arogenate + oxaloacetate = prephenate + L-aspartate. Its function is as follows. Catalyzes the reversible conversion of aspartate and 2-oxoglutarate to glutamate and oxaloacetate. Can also transaminate prephenate in the presence of aspartate. This Thermus thermophilus (strain ATCC 27634 / DSM 579 / HB8) protein is Aspartate/prephenate aminotransferase (aspC).